The chain runs to 70 residues: uncharacterized protein (70 aa).

This is an uncharacterized protein from Escherichia coli (strain K12).